The primary structure comprises 302 residues: Methionyl-tRNA formyltransferase (302 aa).

106–109 (SVLP) provides a ligand contact to (6S)-5,6,7,8-tetrahydrofolate.

This sequence belongs to the Fmt family.

It carries out the reaction L-methionyl-tRNA(fMet) + (6R)-10-formyltetrahydrofolate = N-formyl-L-methionyl-tRNA(fMet) + (6S)-5,6,7,8-tetrahydrofolate + H(+). Attaches a formyl group to the free amino group of methionyl-tRNA(fMet). The formyl group appears to play a dual role in the initiator identity of N-formylmethionyl-tRNA by promoting its recognition by IF2 and preventing the misappropriation of this tRNA by the elongation apparatus. This chain is Methionyl-tRNA formyltransferase, found in Hydrogenobaculum sp. (strain Y04AAS1).